The sequence spans 312 residues: Probable splicing factor, arginine/serine-rich 1 (312 aa).

The RRM 1 domain occupies 3 to 73 (ARIYIGRLTS…ERVILDYSKP (71 aa)). 2 disordered regions span residues 69-125 (DYSK…GRPY) and 196-312 (KMID…DGDN). The segment covering 74–90 (RGGGGDRGGFGGGGRGG) has biased composition (gly residues). The segment covering 103 to 121 (GRDRFDRYDRGPPRRESRY) has biased composition (basic and acidic residues). The 74-residue stretch at 129-202 (HRVVVENLSS…RKIKMIDDSQ (74 aa)) folds into the RRM 2 domain. Basic residues predominate over residues 206–259 (SRSRSNSRSRSRSRSRDRRRSRSRSSSRSKSRSRSPPKRSRRESKSKSRSRSRS).

Belongs to the splicing factor SR family. Extensively phosphorylated on serine residues in the RS domain.

It is found in the nucleus. Plays a functionally redundant role in spermatogenesis and growth rate control. This is Probable splicing factor, arginine/serine-rich 1 (rsp-1) from Caenorhabditis elegans.